The following is a 277-amino-acid chain: Diaminopimelate epimerase (277 aa).

Residues Asn11 and Asn62 each contribute to the substrate site. Cys71 serves as the catalytic Proton donor. Residues Gly72–Asn73, Asn160, Asn193, and Glu211–Arg212 contribute to the substrate site. Cys220 functions as the Proton acceptor in the catalytic mechanism. A substrate-binding site is contributed by Gly221–Thr222.

It belongs to the diaminopimelate epimerase family. In terms of assembly, homodimer.

The protein localises to the cytoplasm. The catalysed reaction is (2S,6S)-2,6-diaminopimelate = meso-2,6-diaminopimelate. Its pathway is amino-acid biosynthesis; L-lysine biosynthesis via DAP pathway; DL-2,6-diaminopimelate from LL-2,6-diaminopimelate: step 1/1. Functionally, catalyzes the stereoinversion of LL-2,6-diaminopimelate (L,L-DAP) to meso-diaminopimelate (meso-DAP), a precursor of L-lysine. The protein is Diaminopimelate epimerase of Methanococcus maripaludis (strain C6 / ATCC BAA-1332).